The primary structure comprises 52 residues: uncharacterized protein (52 aa).

This is an uncharacterized protein from Escherichia coli.